Here is a 161-residue protein sequence, read N- to C-terminus: Ragulator complex protein LAMTOR1 (161 aa).

Positions 1-43 are disordered; it reads MGCCYSSENEDSDQDREERKLLLDPSSTPTKALNGAEPNYHSL. Residue Gly-2 is the site of N-myristoyl glycine attachment. Residues Cys-3 and Cys-4 are each lipidated (S-palmitoyl cysteine). Lys-20 is covalently cross-linked (Glycyl lysine isopeptide (Lys-Gly) (interchain with G-Cter in ubiquitin)). At Ser-27 the chain carries Phosphoserine. Thr-28 carries the phosphothreonine modification. Lys-31 participates in a covalent cross-link: Glycyl lysine isopeptide (Lys-Gly) (interchain with G-Cter in ubiquitin). 2 positions are modified to phosphoserine: Ser-42 and Ser-56. A Glycyl lysine isopeptide (Lys-Gly) (interchain with G-Cter in ubiquitin) cross-link involves residue Lys-60. Residue Ser-98 is modified to Phosphoserine. Glycyl lysine isopeptide (Lys-Gly) (interchain with G-Cter in ubiquitin) cross-links involve residues Lys-103 and Lys-104. Residues 121 to 161 form an interaction with LAMTOR2 and LAMTOR3 region; sequence SEPIPFSDLQQVSRIAAYAYSALSQIRVDAKEELVVQFGIP. Phosphoserine is present on Ser-141.

This sequence belongs to the LAMTOR1 family. Part of the Ragulator complex composed of LAMTOR1, LAMTOR2, LAMTOR3, LAMTOR4 and LAMTOR5. LAMTOR4 and LAMTOR5 form a heterodimer that interacts, through LAMTOR1, with a LAMTOR2, LAMTOR3 heterodimer. Interacts with LAMTOR2 and LAMTOR3; the interaction is direct. The Ragulator complex interacts with both the mTORC1 complex and heterodimers constituted of the Rag GTPases RagA/RRAGA, RagB/RRAGB, RagC/RRAGC and RagD/RRAGD; regulated by amino acid availability. The Ragulator complex interacts with SLC38A9; the probable amino acid sensor. Component of the lysosomal folliculin complex (LFC), composed of FLCN, FNIP1 (or FNIP2), RagA/RRAGA or RagB/RRAGB GDP-bound, RagC/RRAGC or RagD/RRAGD GTP-bound, and Ragulator. Associates with the lysosomal V-ATPase complex; interaction promotes the guanine nucleotide exchange factor (GEF) of the Ragulator complex. Interacts with MMP14. Interacts with CDKN1B; prevents the interaction of CDKN1B with RHOA leaving RHOA in a form accessible to activation by ARHGEF2. Interacts with PIP4P1. N-terminal myristoylation and palmitoylation mediates its recruitment to lysosome membranes, thereby promoting localization of the Ragulator complex to lysosomes. N-myristoylation by NMT1 is required for palmitoylation at Cys-3 and Cys-4. Post-translationally, ubiquitinated at Lys-60, Lys-103 and Lys-104 by UBE3A in neurons, promoting its degradation by the proteasome, thereby limiting mTORC1 signaling and activity-dependent synaptic remodeling. Ubiquitination at Lys-20 impairs the association with the lysosomal V-ATPase complex. Deubiquitination at Lys-20 by USP32 promotes the association with the lysosomal V-ATPase complex and subsequent activation of the mTORC1 complex.

Its subcellular location is the lysosome membrane. The protein localises to the late endosome membrane. Functionally, key component of the Ragulator complex, a multiprotein complex involved in amino acid sensing and activation of mTORC1, a signaling complex promoting cell growth in response to growth factors, energy levels, and amino acids. Activated by amino acids through a mechanism involving the lysosomal V-ATPase, the Ragulator plays a dual role for the small GTPases Rag (RagA/RRAGA, RagB/RRAGB, RagC/RRAGC and/or RagD/RRAGD): it (1) acts as a guanine nucleotide exchange factor (GEF), activating the small GTPases Rag and (2) mediates recruitment of Rag GTPases to the lysosome membrane. Activated Ragulator and Rag GTPases function as a scaffold recruiting mTORC1 to lysosomes where it is in turn activated. LAMTOR1 is directly responsible for anchoring the Ragulator complex to the lysosomal membrane. LAMTOR1 wraps around the other subunits of the Ragulator complex to hold them in place and interacts with the Rag GTPases, thereby playing a key role in the recruitment of the mTORC1 complex to lysosomes. Also involved in the control of embryonic stem cells differentiation via non-canonical RagC/RRAGC and RagD/RRAGD activation: together with FLCN, it is necessary to recruit and activate RagC/RRAGC and RagD/RRAGD at the lysosomes, and to induce exit of embryonic stem cells from pluripotency via non-canonical, mTOR-independent TFE3 inactivation. Also required for late endosomes/lysosomes biogenesis it may regulate both the recycling of receptors through endosomes and the MAPK signaling pathway through recruitment of some of its components to late endosomes. May be involved in cholesterol homeostasis regulating LDL uptake and cholesterol release from late endosomes/lysosomes. May also play a role in RHOA activation. The protein is Ragulator complex protein LAMTOR1 of Mus musculus (Mouse).